The following is an 832-amino-acid chain: Protein P (832 aa).

The segment at 1–177 (MPLSYQHFRK…FCGSPYSWEQ (177 aa)) is terminal protein domain (TP). A spacer region spans residues 178-335 (ELQHGAESFN…HCLSHLVNLL (158 aa)). 2 stretches are compositionally biased toward polar residues: residues 205-220 (SKHQ…QQGQ) and 251-263 (SGHN…ESAS). The interval 205-263 (SKHQQSRLGLQPQQGQLAKGQRGRSGSVRSRAHSATRRSVGVEPSGSGHNNNSASESAS) is disordered. A polymerase/reverse transcriptase domain (RT) region spans residues 336-679 (EDWGPCTEHG…YATLYPVARQ (344 aa)). The 244-residue stretch at 346–589 (KHHIRIPRTP…YSLNFMGYVI (244 aa)) folds into the Reverse transcriptase domain. The Mg(2+) site is built by D418, D540, and D541.

It belongs to the hepadnaviridae P protein family.

It catalyses the reaction DNA(n) + a 2'-deoxyribonucleoside 5'-triphosphate = DNA(n+1) + diphosphate. The enzyme catalyses Endonucleolytic cleavage to 5'-phosphomonoester.. Activated by host HSP70 and HSP40 in vitro to be able to bind the epsilon loop of the pgRNA. Because deletion of the RNase H region renders the protein partly chaperone-independent, the chaperones may be needed indirectly to relieve occlusion of the RNA-binding site by this domain. Inhibited by several reverse-transcriptase inhibitors: Lamivudine, Adefovir and Entecavir. In terms of biological role, multifunctional enzyme that converts the viral RNA genome into dsDNA in viral cytoplasmic capsids. This enzyme displays a DNA polymerase activity that can copy either DNA or RNA templates, and a ribonuclease H (RNase H) activity that cleaves the RNA strand of RNA-DNA heteroduplexes in a partially processive 3'- to 5'-endonucleasic mode. Neo-synthesized pregenomic RNA (pgRNA) are encapsidated together with the P protein, and reverse-transcribed inside the nucleocapsid. Initiation of reverse-transcription occurs first by binding the epsilon loop on the pgRNA genome, and is initiated by protein priming, thereby the 5'-end of (-)DNA is covalently linked to P protein. Partial (+)DNA is synthesized from the (-)DNA template and generates the relaxed circular DNA (RC-DNA) genome. After budding and infection, the RC-DNA migrates in the nucleus, and is converted into a plasmid-like covalently closed circular DNA (cccDNA). The activity of P protein does not seem to be necessary for cccDNA generation, and is presumably released from (+)DNA by host nuclear DNA repair machinery. The protein is Protein P of Gorilla gorilla (western gorilla).